A 617-amino-acid chain; its full sequence is Dihydroxy-acid dehydratase (617 aa).

Mg(2+) is bound at residue Asp81. Position 122 (Cys122) interacts with [2Fe-2S] cluster. Positions 123 and 124 each coordinate Mg(2+). Lys124 carries the N6-carboxylysine modification. Position 195 (Cys195) interacts with [2Fe-2S] cluster. Glu490 provides a ligand contact to Mg(2+). Ser516 functions as the Proton acceptor in the catalytic mechanism.

The protein belongs to the IlvD/Edd family. In terms of assembly, homodimer. [2Fe-2S] cluster serves as cofactor. Requires Mg(2+) as cofactor.

It carries out the reaction (2R)-2,3-dihydroxy-3-methylbutanoate = 3-methyl-2-oxobutanoate + H2O. The catalysed reaction is (2R,3R)-2,3-dihydroxy-3-methylpentanoate = (S)-3-methyl-2-oxopentanoate + H2O. The protein operates within amino-acid biosynthesis; L-isoleucine biosynthesis; L-isoleucine from 2-oxobutanoate: step 3/4. Its pathway is amino-acid biosynthesis; L-valine biosynthesis; L-valine from pyruvate: step 3/4. In terms of biological role, functions in the biosynthesis of branched-chain amino acids. Catalyzes the dehydration of (2R,3R)-2,3-dihydroxy-3-methylpentanoate (2,3-dihydroxy-3-methylvalerate) into 2-oxo-3-methylpentanoate (2-oxo-3-methylvalerate) and of (2R)-2,3-dihydroxy-3-methylbutanoate (2,3-dihydroxyisovalerate) into 2-oxo-3-methylbutanoate (2-oxoisovalerate), the penultimate precursor to L-isoleucine and L-valine, respectively. This chain is Dihydroxy-acid dehydratase, found in Acidiphilium cryptum (strain JF-5).